A 270-amino-acid polypeptide reads, in one-letter code: uncharacterized protein (270 aa).

The protein localises to the virion. This is an uncharacterized protein from Acanthamoeba polyphaga (Amoeba).